We begin with the raw amino-acid sequence, 1081 residues long: Mediator of RNA polymerase II transcription subunit 15 (1081 aa).

Serine 2 carries the N-acetylserine modification. The interval 25–49 is interaction with GCN4; the sequence is LQVLMDINTLNGGSSDTADKIRIHA. The tract at residues 238 to 286 is disordered; sequence QAQAQANNNNNGLPQNGNINNNINIPQQQQMQPPNSSANNNPLQQQSSQ. Residue serine 335 is modified to Phosphoserine. 11 consecutive repeat copies span residues 422–423, 424–425, 426–427, 428–429, 430–431, 432–433, 434–435, 436–437, 438–439, 440–441, and 442–443. The segment at 422–481 is 30 X 2 AA approximate tandem repeats of Q-A; sequence QAQAQAQAQAQAQAQAQAQAQAAQAAQAQAQAQAQAQAQAQAQAQAQAQAQAQAQAQAQA. The 12; approximate repeat unit spans residues 444 to 445; sequence AQ. One copy of the 13; approximate repeat lies at 446–447; the sequence is AA. 17 tandem repeats follow at residues 448–449, 450–451, 452–453, 454–455, 456–457, 458–459, 460–461, 462–463, 464–465, 466–467, 468–469, 470–471, 472–473, 474–475, 476–477, 478–479, and 480–481. Over residues 476-497 the composition is skewed to low complexity; sequence QAQAQAHAQHQPSQQPQQAQQQ. Disordered regions lie at residues 476–505 and 692–712; these read QAQA…HGLT and QQQQ…YSAM. Phosphoserine occurs at positions 736, 752, 783, 785, and 789. Residues 744–836 are disordered; it reads PVSAAATPSL…KTVQSPMGAQ (93 aa). Residues 749–836 are compositionally biased toward polar residues; it reads ATPSLNKTIN…KTVQSPMGAQ (88 aa). Phosphothreonine is present on threonine 793. Phosphoserine occurs at positions 831, 1003, 1008, 1018, and 1034. The tract at residues 1026 to 1055 is disordered; the sequence is DSKKIKVDSPDDPFMTKSGATTSEKQEVTN.

This sequence belongs to the Mediator complex subunit 15 family. In terms of assembly, component of the Mediator complex, which is composed of at least 21 subunits that form three structurally distinct submodules. The Mediator head module contains MED6, MED8, MED11, SRB4/MED17, SRB5/MED18, ROX3/MED19, SRB2/MED20 and SRB6/MED22, the middle module contains MED1, MED4, NUT1/MED5, MED7, CSE2/MED9, NUT2/MED10, SRB7/MED21 and SOH1/MED31, and the tail module contains MED2, PGD1/MED3, RGR1/MED14, GAL11/MED15 and SIN4/MED16. The head and the middle modules interact directly with RNA polymerase II, whereas the elongated tail module interacts with gene-specific regulatory proteins. GAL11/MED15 interacts with the activator GAL4; the interaction is direct. GAL11/MED15 interacts (via multiple regions) with the activator GCN4; the interaction is direct.

The protein resides in the nucleus. In terms of biological role, component of the Mediator complex, a coactivator involved in the regulated transcription of nearly all RNA polymerase II-dependent genes. Mediator functions as a bridge to convey information from gene-specific regulatory proteins to the basal RNA polymerase II transcription machinery. The Mediator complex, having a compact conformation in its free form, is recruited to promoters by direct interactions with regulatory proteins and serves for the assembly of a functional pre-initiation complex with RNA polymerase II and the general transcription factors. The Mediator complex unfolds to an extended conformation and partially surrounds RNA polymerase II, specifically interacting with the unphosphorylated form of the C-terminal domain (CTD) of RNA polymerase II. The Mediator complex dissociates from the RNA polymerase II holoenzyme and stays at the promoter when transcriptional elongation begins. It has an important role in the negative regulation of Ty transcription. In Saccharomyces cerevisiae (strain ATCC 204508 / S288c) (Baker's yeast), this protein is Mediator of RNA polymerase II transcription subunit 15.